The primary structure comprises 176 residues: Bifunctional protein PyrR (176 aa).

The PRPP-binding signature appears at 93-105 (VILVDDVLYTGRT).

This sequence belongs to the purine/pyrimidine phosphoribosyltransferase family. PyrR subfamily. In terms of assembly, homodimer and homohexamer; in equilibrium.

The enzyme catalyses UMP + diphosphate = 5-phospho-alpha-D-ribose 1-diphosphate + uracil. Functionally, regulates transcriptional attenuation of the pyrimidine nucleotide (pyr) operon by binding in a uridine-dependent manner to specific sites on pyr mRNA. This disrupts an antiterminator hairpin in the RNA and favors formation of a downstream transcription terminator, leading to a reduced expression of downstream genes. Also displays a weak uracil phosphoribosyltransferase activity which is not physiologically significant. The polypeptide is Bifunctional protein PyrR (Streptococcus mutans serotype c (strain ATCC 700610 / UA159)).